The sequence spans 200 residues: Membrane-spanning 4-domains subfamily A member 5 (200 aa).

The Cytoplasmic portion of the chain corresponds to 1–52; the sequence is MDSSTAHSPVFLVFPPEITASEYESTELSATTFSTQSPLQKLFARKMKILGT. A helical membrane pass occupies residues 53–73; sequence IQILFGIMTFSFGVIFLFTLL. At 74–80 the chain is on the extracellular side; that stretch reads KPYPRFP. A helical membrane pass occupies residues 81–101; sequence FIFLSGYPFWGSVLFINSGAF. Residues 102–120 lie on the Cytoplasmic side of the membrane; sequence LIAVKRKTTETLIILSRIM. A helical membrane pass occupies residues 121-141; it reads NFLSALGAIAGIILLTFGFIL. Topologically, residues 142–159 are extracellular; sequence DQNYICGYSHQNSQCKAV. The helical transmembrane segment at 160 to 180 threads the bilayer; sequence TVLFLGILITLMTFSIIELFI. The Cytoplasmic portion of the chain corresponds to 181–200; it reads SLPFSILGCHSEDCDCEQCC.

This sequence belongs to the MS4A family. As to expression, expressed at high level in the testis. Detected also in the pancreas, heart and in the brain.

Its subcellular location is the membrane. In terms of biological role, may be involved in signal transduction as a component of a multimeric receptor complex. In Homo sapiens (Human), this protein is Membrane-spanning 4-domains subfamily A member 5 (MS4A5).